Reading from the N-terminus, the 94-residue chain is Small ribosomal subunit protein bS20c (94 aa).

It belongs to the bacterial ribosomal protein bS20 family.

Its subcellular location is the plastid. It localises to the chloroplast. Functionally, binds directly to 16S ribosomal RNA. This Porphyra purpurea (Red seaweed) protein is Small ribosomal subunit protein bS20c.